The sequence spans 296 residues: ADP-forming sulfoacetate-CoA ligase subunit SqwL (296 aa).

CoA is bound by residues 17 to 20 (TGSE), K43, and 96 to 98 (IAD). The Tele-phosphohistidine intermediate role is filled by H251.

It belongs to the succinate/malate CoA ligase alpha subunit family. As to quaternary structure, forms a complex with SqwK.

The catalysed reaction is sulfoacetate + ATP + CoA = sulfoacetyl-CoA + ADP + phosphate. Functionally, part of a variant of the sulfo-TK pathway, a D-sulfoquinovose degradation pathway that produces sulfoacetate. Hydrolyzes sulfoacetyl-coenzyme A (sulfoacetyl-CoA) to produce sulfoacetate and CoA coupled with the phosphorylation of ADP to generate ATP. Cannot use succinate, acetate or 3-hydroxypropionate, and shows only residual activities with malonate and 3-sulfopropanoate. The sequence is that of ADP-forming sulfoacetate-CoA ligase subunit SqwL from Acholeplasma sp.